The chain runs to 176 residues: Translation initiation factor IF-3 (176 aa).

It belongs to the IF-3 family. As to quaternary structure, monomer.

It localises to the cytoplasm. IF-3 binds to the 30S ribosomal subunit and shifts the equilibrium between 70S ribosomes and their 50S and 30S subunits in favor of the free subunits, thus enhancing the availability of 30S subunits on which protein synthesis initiation begins. The sequence is that of Translation initiation factor IF-3 from Streptococcus equi subsp. zooepidemicus (strain H70).